We begin with the raw amino-acid sequence, 128 residues long: Protein 2B* (128 aa).

2 disordered regions span residues 1 to 27 (PFMFRPRKQVFPDPRSGSVINGSNPTA) and 92 to 128 (RDDNSSDASGPFDSALLRNIDGRRDYKPDKSVRRNSS). The span at 18 to 27 (SVINGSNPTA) shows a compositional bias: polar residues. Basic and acidic residues predominate over residues 111-128 (IDGRRDYKPDKSVRRNSS).

This sequence belongs to the encephalomyocarditis virus protein 2B* family.

This chain is Protein 2B*, found in Aotus trivirgatus (Three-striped night monkey).